The primary structure comprises 392 residues: Major outer membrane protein P.IA (392 aa).

An N-terminal signal peptide occupies residues 1 to 19; that stretch reads MRKKLTALVLSALPLAAVA.

The protein belongs to the Gram-negative porin family. In terms of assembly, homotrimer.

It is found in the cell outer membrane. Functionally, serves as a slightly cation selective porin. Major antigen on the gonococcal cell surface and it may have pathogenic properties in addition to its porin activity. In Neisseria meningitidis serogroup B (strain ATCC BAA-335 / MC58), this protein is Major outer membrane protein P.IA (porA).